Consider the following 83-residue polypeptide: U5-theraphotoxin-Hs1a 5 (83 aa).

The first 21 residues, 1–21 (MKTSMFLTLTGLVLLFVVCYA), serve as a signal peptide directing secretion. Residues 22 to 49 (SESEEKEFPKELPSSIFAADSDFKVEER) constitute a propeptide that is removed on maturation. 3 disulfides stabilise this stretch: C51-C63, C56-C68, and C62-C75.

The protein belongs to the neurotoxin 10 (Hwtx-1) family. 51 (Hntx-8) subfamily. Hntx-8 sub-subfamily. Expressed by the venom gland.

The protein localises to the secreted. Agglutinates erythrocytes. This is U5-theraphotoxin-Hs1a 5 from Cyriopagopus schmidti (Chinese bird spider).